The following is a 239-amino-acid chain: ATP synthase subunit a (239 aa).

5 helical membrane-spanning segments follow: residues 17–37, 75–95, 113–133, 182–202, and 206–226; these read GTVC…VYFF, FHLL…IGLI, DPFV…LFGV, LLTL…PLAI, and MVWI…FVTL.

The protein belongs to the ATPase A chain family. As to quaternary structure, F-type ATPases have 2 components, CF(1) - the catalytic core - and CF(0) - the membrane proton channel. CF(1) has five subunits: alpha(3), beta(3), gamma(1), delta(1), epsilon(1). CF(0) has three main subunits: a(1), b(2) and c(9-12). The alpha and beta chains form an alternating ring which encloses part of the gamma chain. CF(1) is attached to CF(0) by a central stalk formed by the gamma and epsilon chains, while a peripheral stalk is formed by the delta and b chains.

The protein localises to the cell membrane. Its function is as follows. Key component of the proton channel; it plays a direct role in the translocation of protons across the membrane. The chain is ATP synthase subunit a from Enterococcus hirae (strain ATCC 9790 / DSM 20160 / JCM 8729 / LMG 6399 / NBRC 3181 / NCIMB 6459 / NCDO 1258 / NCTC 12367 / WDCM 00089 / R).